The following is a 357-amino-acid chain: tRNA-specific 2-thiouridylase MnmA (357 aa).

ATP contacts are provided by residues 7–14 (AMSGGVDS) and M33. The active-site Nucleophile is C101. C101 and C198 form a disulfide bridge. Residue G125 participates in ATP binding. Residues 148 to 150 (KDQ) form an interaction with tRNA region. Residue C198 is the Cysteine persulfide intermediate of the active site.

It belongs to the MnmA/TRMU family.

It localises to the cytoplasm. The catalysed reaction is S-sulfanyl-L-cysteinyl-[protein] + uridine(34) in tRNA + AH2 + ATP = 2-thiouridine(34) in tRNA + L-cysteinyl-[protein] + A + AMP + diphosphate + H(+). Functionally, catalyzes the 2-thiolation of uridine at the wobble position (U34) of tRNA, leading to the formation of s(2)U34. In Herpetosiphon aurantiacus (strain ATCC 23779 / DSM 785 / 114-95), this protein is tRNA-specific 2-thiouridylase MnmA.